Reading from the N-terminus, the 430-residue chain is MARILRNVYSLRSSLFSSELLRRSVVGTSFQLRGFAAKAKKKSKSDGNGSSEEGMSKKEIALQQALDQITSSFGKGSIMYLGRAVSPRNVPVFSTGSFALDVALGVGGLPKGRVVEIYGPEASGKTTLALHVIAEAQKQGGTCVFVDAEHALDSSLAKAIGVNTENLLLSQPDCGEQALSLVDTLIRSGSVDVIVVDSVAALVPKGELEGEMGDAHMAMQARLMSQALRKLSHSLSLSQTLLIFINQVRSKLSTFGGFGGPTEVTCGGNALKFYASMRLNIKRIGLIKKGEETTGSQVSVKIVKNKLAPPFRTAQFELEFGKGICKITEIIDLSIKHKFIAKNGTFYNLNGKNYHGKEALKRFLKQNESDQEELMKKLQDKLIADEAADKETESESEEEDSLRVVVSPDNTDDESPALVVGAAAVVVEAA.

The N-terminal 35 residues, Met-1–Phe-35, are a transit peptide targeting the mitochondrion. Residue Gly-119–Thr-126 participates in ATP binding. Residues Asp-385–Ser-415 form a disordered region.

The protein belongs to the RecA family.

The protein localises to the mitochondrion. In terms of biological role, involved in recombination ability and DNA strand transfer activity. In Arabidopsis thaliana (Mouse-ear cress), this protein is DNA repair protein recA homolog 3, mitochondrial.